The sequence spans 339 residues: Protein pelota homolog (339 aa).

This sequence belongs to the eukaryotic release factor 1 family. Pelota subfamily. As to quaternary structure, monomer. A divalent metal cation serves as cofactor.

The protein resides in the cytoplasm. Its function is as follows. May function in recognizing stalled ribosomes, interact with stem-loop structures in stalled mRNA molecules, and effect endonucleolytic cleavage of the mRNA. May play a role in the release non-functional ribosomes and degradation of damaged mRNAs. Has endoribonuclease activity. This is Protein pelota homolog from Picrophilus torridus (strain ATCC 700027 / DSM 9790 / JCM 10055 / NBRC 100828 / KAW 2/3).